The chain runs to 87 residues: Small ribosomal subunit protein uS15c (87 aa).

Belongs to the universal ribosomal protein uS15 family. Part of the 30S ribosomal subunit.

The protein resides in the plastid. The protein localises to the chloroplast. This chain is Small ribosomal subunit protein uS15c (rps15), found in Oenothera biennis (German evening primrose).